Consider the following 481-residue polypeptide: E3 ubiquitin-protein ligase makorin-1 (481 aa).

3 consecutive C3H1-type zinc fingers follow at residues tryptophan 55–serine 82, serine 84–proline 111, and glutamate 208–serine 235. Residues cysteine 236–histidine 263 are makorin-type Cys-His. Residues cysteine 281–arginine 335 form an RING-type zinc finger. Residues alanine 364–proline 393 form a C3H1-type 4 zinc finger.

In terms of assembly, interacts with p53/TP53 and CDKN1A. Interacts with TERT, modulating telomere length homeostasis. In terms of processing, auto-ubiquitinated; which leads to proteasomal degradation. As to expression, highly expressed in embryo, in specific cell types of the central nervous system, in brain with the strongest levels of expression in the mantle layers and in testis. Moderate to low levels in somatic tissues.

The catalysed reaction is S-ubiquitinyl-[E2 ubiquitin-conjugating enzyme]-L-cysteine + [acceptor protein]-L-lysine = [E2 ubiquitin-conjugating enzyme]-L-cysteine + N(6)-ubiquitinyl-[acceptor protein]-L-lysine.. It participates in protein modification; protein ubiquitination. Its function is as follows. E3 ubiquitin ligase catalyzing the covalent attachment of ubiquitin moieties onto substrate proteins. These substrates include FILIP1, p53/TP53, CDKN1A and TERT. Keeps cells alive by suppressing p53/TP53 under normal conditions, but stimulates apoptosis by repressing CDKN1A under stress conditions. Acts as a negative regulator of telomerase. Has negative and positive effects on RNA polymerase II-dependent transcription. The protein is E3 ubiquitin-protein ligase makorin-1 (Mkrn1) of Mus musculus (Mouse).